We begin with the raw amino-acid sequence, 552 residues long: Membrane protein insertase YidC (552 aa).

Residues 3-23 (IKRTVLWVIFFMSAVMLFDNW) form a helical membrane-spanning segment. The segment at 36–59 (SATPTRTVGSAAPGTTTPGTQPAD) is disordered. The span at 42 to 59 (TVGSAAPGTTTPGTQPAD) shows a compositional bias: low complexity. Helical transmembrane passes span 364–384 (WGWS…PLSA), 430–450 (FGGC…YWVL), and 504–524 (MMFM…GLVL).

The protein belongs to the OXA1/ALB3/YidC family. Type 1 subfamily. Interacts with the Sec translocase complex via SecD. Specifically interacts with transmembrane segments of nascent integral membrane proteins during membrane integration.

The protein resides in the cell inner membrane. Its function is as follows. Required for the insertion and/or proper folding and/or complex formation of integral membrane proteins into the membrane. Involved in integration of membrane proteins that insert both dependently and independently of the Sec translocase complex, as well as at least some lipoproteins. Aids folding of multispanning membrane proteins. The protein is Membrane protein insertase YidC of Paraburkholderia xenovorans (strain LB400).